The following is a 234-amino-acid chain: Zinc finger FYVE domain-containing protein 21 (234 aa).

Residues 44-104 (DKECPRCMQC…QCADCALVSH (61 aa)) form an FYVE-type zinc finger. Cysteine 50, cysteine 53, cysteine 66, cysteine 69, cysteine 74, cysteine 77, cysteine 96, and cysteine 99 together coordinate Zn(2+). A PH-like region spans residues 107–234 (AEFYDKQLKV…TKLLYESRDQ (128 aa)).

In terms of assembly, interacts with PTK2/FAK1. Widely expressed.

Its subcellular location is the cell junction. The protein resides in the focal adhesion. It localises to the cytoplasmic vesicle. The protein localises to the endosome. Functionally, plays a role in cell adhesion, and thereby in cell motility which requires repeated formation and disassembly of focal adhesions. Regulates microtubule-induced PTK2/FAK1 dephosphorylation, an event important for focal adhesion disassembly, as well as integrin beta-1/ITGB1 cell surface expression. This Mus musculus (Mouse) protein is Zinc finger FYVE domain-containing protein 21 (Zfyve21).